Here is a 445-residue protein sequence, read N- to C-terminus: MAQNMAPIFHFIAISLSCSFLFVLSSSQDSQSLHYPLPTSSSKPSLLVLPIQQDASTGLHWANIHKRTPLMQVPVLLDLNGKHLWVTCSYHYSSSTYQAPFCHSTQCSRANSHQCFTCTDSATTRPGCHNNTCALMTSNPVTQEAGFGELAQDVLAIHSTHGSKLGPMVKVLQFLFSCAPSFLAQKGLPNNIQGALGLGHAPISLPNQLFSHFGLRRQFTMCLSRYPTSNGAILFGDIYDPNNNYIDNSVEVLLDMVYTPLGISLQGEYLMQVSAIRVNKHIVVPTKNPSMLSSNHGDSRIGGVMITTTNPYTILHHSIYEVFTQVFANNIPKQAQVEAVGPFGLCFDSKKISGGIPNVEFVMDSPDDVWRISEENLMVQAQNGVSCLGFVDGGMHTRTEIALGAHQLEENLVVFDFAKSRVEFNSNPLKSHGKTCANLFDLNNA.

A signal peptide spans 1-33 (MAQNMAPIFHFIAISLSCSFLFVLSSSQDSQSL). Positions 60–425 (HWANIHKRTP…DFAKSRVEFN (366 aa)) constitute a Peptidase A1 domain. 5 disulfide bridges follow: C88/C178, C102/C115, C107/C133, C118/C128, and C346/C387. N-linked (GlcNAc...) asparagine glycosylation occurs at N130.

It belongs to the peptidase A1 family. Two-subunit monomeric unit made of alpha and beta subunits coupled by disulfide bonds (at pH 4.5 and under non-reducing conditions). Can also form oligomers including dimer, tetramer and cyclic hexamer (trimer of dimers) (at pH &gt; 5.5). Component of globulins complexes which accumulate in seeds. Interacts with flavonoids (e.g. apigenin glucosides) present in globulins complexes. Post-translationally, glycosylated on alpha chain.

The protein localises to the secreted. Its subcellular location is the extracellular space. Sulfur-rich seed storage protein that remains undegraded at germination. This is Gamma conglutin 2 from Lupinus angustifolius (Narrow-leaved blue lupine).